A 387-amino-acid polypeptide reads, in one-letter code: Exodeoxyribonuclease 7 large subunit (387 aa).

This sequence belongs to the XseA family. As to quaternary structure, heterooligomer composed of large and small subunits.

It localises to the cytoplasm. It catalyses the reaction Exonucleolytic cleavage in either 5'- to 3'- or 3'- to 5'-direction to yield nucleoside 5'-phosphates.. Functionally, bidirectionally degrades single-stranded DNA into large acid-insoluble oligonucleotides, which are then degraded further into small acid-soluble oligonucleotides. This chain is Exodeoxyribonuclease 7 large subunit, found in Campylobacter lari (strain RM2100 / D67 / ATCC BAA-1060).